The following is a 186-amino-acid chain: Imidazoleglycerol-phosphate dehydratase (186 aa).

Belongs to the imidazoleglycerol-phosphate dehydratase family.

Its subcellular location is the cytoplasm. It catalyses the reaction D-erythro-1-(imidazol-4-yl)glycerol 3-phosphate = 3-(imidazol-4-yl)-2-oxopropyl phosphate + H2O. The protein operates within amino-acid biosynthesis; L-histidine biosynthesis; L-histidine from 5-phospho-alpha-D-ribose 1-diphosphate: step 6/9. The polypeptide is Imidazoleglycerol-phosphate dehydratase (Dictyoglomus turgidum (strain DSM 6724 / Z-1310)).